Consider the following 307-residue polypeptide: Mediator of RNA polymerase II transcription subunit 18 (307 aa).

The segment covering 117-126 (TNFNSTNEDQ) has biased composition (polar residues). A disordered region spans residues 117–162 (TNFNSTNEDQNNSKHTEDTVNESRNSDDIIDVDMDASPAPSNESCS).

This sequence belongs to the Mediator complex subunit 18 family. In terms of assembly, component of the Mediator complex, which is composed of at least 21 subunits that form three structurally distinct submodules. The Mediator head module contains MED6, MED8, MED11, SRB4/MED17, SRB5/MED18, ROX3/MED19, SRB2/MED20 and SRB6/MED22, the middle module contains MED1, MED4, NUT1/MED5, MED7, CSE2/MED9, NUT2/MED10, SRB7/MED21 and SOH1/MED31, and the tail module contains MED2, PGD1/MED3, RGR1/MED14, GAL11/MED15 and SIN4/MED16. The head and the middle modules interact directly with RNA polymerase II, whereas the elongated tail module interacts with gene-specific regulatory proteins. SRB5/MED18 interacts directly with MED8 and SRB2/MED20.

Its subcellular location is the nucleus. Component of the Mediator complex, a coactivator involved in the regulated transcription of nearly all RNA polymerase II-dependent genes. Mediator functions as a bridge to convey information from gene-specific regulatory proteins to the basal RNA polymerase II transcription machinery. The Mediator complex, having a compact conformation in its free form, is recruited to promoters by direct interactions with regulatory proteins and serves for the assembly of a functional preinitiation complex with RNA polymerase II and the general transcription factors. The Mediator complex unfolds to an extended conformation and partially surrounds RNA polymerase II, specifically interacting with the unphosphorylated form of the C-terminal domain (CTD) of RNA polymerase II. The Mediator complex dissociates from the RNA polymerase II holoenzyme and stays at the promoter when transcriptional elongation begins. The chain is Mediator of RNA polymerase II transcription subunit 18 (SRB5) from Saccharomyces cerevisiae (strain ATCC 204508 / S288c) (Baker's yeast).